Here is a 723-residue protein sequence, read N- to C-terminus: F-box protein MAX2 homolog B (723 aa).

Residues 2–55 (AKTPIPFTTLNDLPDVILSNIIAAVSDTRSRNATALVCHKWLVLERSTRTSLTL) enclose the F-box domain.

Part of a putative SCF (SKP1/Cullin/F-box) ubiquitin ligase complex. Interacts with KAI2IA in the presence of (-)-germacrene D. In terms of tissue distribution, mainly expressed in fully expanded leaves, lateral roots, axillary and shoot apex, and, to a lower extent, in internodes and nodes.

Its subcellular location is the nucleus. The protein resides in the cytoplasm. Functionally, component of SCF(ASK-cullin-F-box) E3 ubiquitin ligase complexes, which may mediate the ubiquitination and subsequent proteasomal degradation of target proteins. Is necessary for responses to strigolactones and may be involved in the ubiquitin-mediated degradation of specific proteins that activate axillary growth. Targets probably SMAX1A to degradation upon the formation of an E3 SCF ubiquitin ligase complex (ASK-cullin-F-box) containing MAX2B and KAI2IA in response to (-)-germacrene D in the stigma. The protein is F-box protein MAX2 homolog B of Petunia hybrida (Petunia).